We begin with the raw amino-acid sequence, 548 residues long: Glycosyl hydrolase family 109 protein 3 (548 aa).

Positions 1–21 (MKLKKLLLSVLMLLSISGLQA) are cleaved as a signal peptide. NAD(+)-binding positions include 71–72 (MR), Asp93, 141–144 (WNHH), 161–162 (EV), and Asn190. Tyr219 contacts substrate. Position 240-244 (240-244 (DNLHW)) interacts with NAD(+). Substrate contacts are provided by residues Arg245, 257–260 (YATH), and Tyr335. Tyr257 is a binding site for NAD(+).

Belongs to the Gfo/Idh/MocA family. Glycosyl hydrolase 109 subfamily. The cofactor is NAD(+).

Glycosidase. The sequence is that of Glycosyl hydrolase family 109 protein 3 from Phocaeicola vulgatus (strain ATCC 8482 / DSM 1447 / JCM 5826 / CCUG 4940 / NBRC 14291 / NCTC 11154) (Bacteroides vulgatus).